Reading from the N-terminus, the 1097-residue chain is Protein toll (1097 aa).

A signal peptide spans 1 to 27 (MSRLKAASELALLVIILQLLQWPGSEA). The Extracellular segment spans residues 28–807 (SFGRDACSEM…ICPAEKGVFI (780 aa)). Intrachain disulfides connect Cys34–Cys45, Cys43–Cys56, and Cys79–Cys107. Residues Asn80, Asn140, and Asn175 are each glycosylated (N-linked (GlcNAc...) asparagine). 15 LRR repeats span residues 175-195 (NLSH…LFDD), 198-219 (NLES…IFGK), 222-243 (KLKQ…DFEG), 246-267 (SVLG…VFAH), 270-291 (NVTD…LFDH), 294-314 (HLNE…PSRL), 320-340 (ELQI…LFEH), 343-364 (QITN…LLEH), 367-388 (NLLS…LFAH), 391-412 (NLTD…IFSN), 415-436 (NLVT…AFVS), 439-460 (GLRH…LDIM), 474-495 (GLLT…WKNT), 498-521 (QLRE…AFLS), and 523-544 (NRLH…EDVH). A glycan (N-linked (GlcNAc...) asparagine) is linked at Asn235. N-linked (GlcNAc...) asparagine glycans are attached at residues Asn270 and Asn275. An N-linked (GlcNAc...) asparagine glycan is attached at Asn346. Asn391 carries an N-linked (GlcNAc...) asparagine glycan. 3 N-linked (GlcNAc...) asparagine glycosylation sites follow: Asn482, Asn508, and Asn528. The LRRCT 1 domain occupies 561–620 (NPLVCDCTILWFIQLVRGVHKPQYSRQFKLRTDRLVCSQPNVLEGTPVRQIEPQTLICPL). 4 cysteine pairs are disulfide-bonded: Cys565/Cys597, Cys567/Cys618, Cys631/Cys637, and Cys635/Cys650. The LRRNT domain occupies 622-663 (FSDDPRERKCPRGCNCHVRTYDKALVINCHSGNLTHVPRLPN). Residues Asn654, Asn677, Asn703, Asn715, Asn730, and Asn738 are each glycosylated (N-linked (GlcNAc...) asparagine). 3 LRR repeats span residues 669–690 (QLME…NTPG), 693–713 (SVTS…DQLP), and 715–738 (NLTH…GFLN). Residues 751–801 (NPWMCDCTAKPLLLFTQDNFERIGDRNEMMCVNAEMPTRMVELSTNDICPA) enclose the LRRCT 2 domain. Disulfide bonds link Cys755–Cys781 and Cys757–Cys799. A helical membrane pass occupies residues 808–828 (ALAVVIALTGLLAGFTAALYY). Over 829–1097 (KFQTEIKIWL…INTNAKQSDV (269 aa)) the chain is Cytoplasmic. Positions 857-993 (KKFDAFISYS…WFWDKLRFAL (137 aa)) constitute a TIR domain.

This sequence belongs to the Toll-like receptor family. As to quaternary structure, in the absence of ligand, forms a low-affinity disulfide-linked homodimer. In the presence of ligand, crystal structures show one Tl molecule bound to a spaetzle C-106 homodimer. However, the active complex probably consists of two Tl molecules bound to a spaetzle C-106 homodimer. This is supported by in vitro experiments which also show binding of the spaetzle C-106 dimer to 2 Tl receptors. Ligand binding induces conformational changes in the extracellular domain of Tl. This may enable a secondary homodimerization interface at the C-terminus of the Tl extracellular domain. In terms of tissue distribution, in early embryos, concentrated in the pseudocleavage furrows that form transiently between nuclei before cellularization and in the cleavage furrows during cellularization (at protein level). Later, found on cells in the mesectoderm, stomodeum, proctodeum, anterior and posterior midguts, splanchnopleura, salivary gland placode and adjacent to the segmentally repeated tracheal placodes (at protein level). During and after germ band shortening, localized in a number of cell types, including the salivary gland, foregut, hindgut, Malpighian tubules and epidermis (at protein level). In embryos, high expression in M13 with comparatively low expression in M12.

The protein resides in the cell membrane. Its subcellular location is the cytoplasm. Functionally, receptor for the cleaved activated form of spz, spaetzle C-106. Binding to spaetzle C-106 activates the Toll signaling pathway and induces expression of the antifungal peptide drosomycin. Component of the extracellular signaling pathway that establishes dorsal-ventral polarity in the embryo. Promotes heterophilic cellular adhesion. Involved in synaptic targeting of motoneurons RP5 and V to muscle 12 (M12); functions as a repulsive cue inhibiting motoneuron synapse formation on muscle 13 (M13) to guide RP5 and V to the neighboring M12, where its expression is repressed by tey. May also function in embryonic neuronal survival and the synaptic targeting of SNa motoneurons. This is Protein toll from Drosophila melanogaster (Fruit fly).